The chain runs to 45 residues: Sperm-specific protein Phi-3 (45 aa).

The tract at residues 1 to 45 is disordered; that stretch reads AKAKRSPRKKKAAVKKSSKSKAKKPKSPKKKKAAKKPAKKAAKKK.

The protein resides in the nucleus. Its subcellular location is the chromosome. Its function is as follows. Involved in nuclear basic protein transition: histones are replaced by spermatid specific proteins which are themselves replaced by protamines in late spermatids. The polypeptide is Sperm-specific protein Phi-3 (Mytilus californianus (California mussel)).